Here is a 340-residue protein sequence, read N- to C-terminus: Lipoate--protein ligase 2 (340 aa).

One can recognise a BPL/LPL catalytic domain in the interval 31–222 (FLDEDILFPY…QILGIDDIKE (192 aa)). Residues arginine 73, 78-81 (GAVY), lysine 136, and alanine 140 each bind ATP. (R)-lipoate is bound at residue lysine 136. Residues 293 to 321 (QGDIKDVEEALQGTKMTREDLMHQLKQLD) adopt a coiled-coil conformation.

Belongs to the LplA family.

It carries out the reaction L-lysyl-[lipoyl-carrier protein] + (R)-lipoate + ATP = N(6)-[(R)-lipoyl]-L-lysyl-[lipoyl-carrier protein] + AMP + diphosphate + H(+). It functions in the pathway protein modification; protein lipoylation via exogenous pathway; protein N(6)-(lipoyl)lysine from lipoate: step 1/2. It participates in protein modification; protein lipoylation via exogenous pathway; protein N(6)-(lipoyl)lysine from lipoate: step 2/2. Catalyzes specifically the lipoylation of GcvH-L (SAV0324), likely via the ATP-dependent activation of lipoate to lipoyl-AMP and the transfer of the activated lipoyl onto the lipoyl domain of the target protein. Can also utilize lipoamide as substrate for GcvH-L modification. In Staphylococcus aureus (strain Mu50 / ATCC 700699), this protein is Lipoate--protein ligase 2.